The sequence spans 1117 residues: ATP-dependent RNA helicase mtr4 (1117 aa).

A disordered region spans residues 19 to 86; the sequence is KSLKEESKNS…DNQDLIPNND (68 aa). Residues 65 to 79 show a composition bias toward basic and acidic residues; that stretch reads SATKRAKIENLKDNQ. Residues 207-363 form the Helicase ATP-binding domain; it reads IACIERQESV…WITKIHRQPC (157 aa). 220-227 lines the ATP pocket; the sequence is AHTSAGKT. Residues 311–314 carry the DEIH box motif; that stretch reads DEIH. The tract at residues 414–433 is disordered; it reads GDDPAAMATKGNAKKGKTGK. The Helicase C-terminal domain occupies 441 to 642; that stretch reads DIYKIVKMIM…LSYNMILNLL (202 aa).

The protein belongs to the helicase family. SKI2 subfamily. In terms of assembly, component of the TRAMP complex composed of at least cid14, mtr4, and air1.

It is found in the nucleus. In terms of biological role, component of the TRAMP complex which has a poly(A) RNA polymerase activity and is involved in a post-transcriptional quality control mechanism limiting inappropriate expression of genetic information. Polyadenylation is required for the degradative activity of the exosome on several of its nuclear RNA substrates. Required for heterochromatic gene silencing at centromeric repeats by either exosome- or RNAi-mediated degradation of heterochromatic transcripts. This chain is ATP-dependent RNA helicase mtr4 (mtr4), found in Schizosaccharomyces pombe (strain 972 / ATCC 24843) (Fission yeast).